The sequence spans 864 residues: Putative Gly-rich membrane protein Bcell_0380 (864 aa).

Residues 7–27 (ITFLAAFICIIFVIYAIYHSV) form a helical membrane-spanning segment. The interval 372–399 (TVENSFYDEDTTGQSDTGKGTPMSTADM) is disordered. The span at 383–395 (TGQSDTGKGTPMS) shows a compositional bias: polar residues.

The protein localises to the cell membrane. In Evansella cellulosilytica (strain ATCC 21833 / DSM 2522 / FERM P-1141 / JCM 9156 / N-4) (Bacillus cellulosilyticus), this protein is Putative Gly-rich membrane protein Bcell_0380.